A 211-amino-acid chain; its full sequence is Proline-rich 33 kDa extensin-related protein (211 aa).

Positions 1-14 are cleaved as a signal peptide; it reads AILGVAIFAAPSLA. Composition is skewed to pro residues over residues 25–59 and 82–93; these read PPVY…PVHK and HKPPVYKPPVQK. Positions 25 to 211 are disordered; the sequence is PPVYTPPVHK…RHPPVENTGN (187 aa). Basic residues-rich tracts occupy residues 101 to 111 and 127 to 139; these read PVHKPPIHKPP and PIHK…RPPV. Basic and acidic residues-rich tracts occupy residues 142-159 and 167-177; these read PPTE…EHKP and KTEKPVPEHKP. The span at 179 to 198 shows a compositional bias: pro residues; it reads HLPPIVVRPPPTHKPNPPYG.

Belongs to the plant proline-rich protein superfamily. ENOD12 family.

Its subcellular location is the secreted. It localises to the cell wall. The sequence is that of Proline-rich 33 kDa extensin-related protein from Daucus carota (Wild carrot).